The sequence spans 222 residues: Protein-L-isoaspartate O-methyltransferase (222 aa).

Ser-72 is a catalytic residue.

It belongs to the methyltransferase superfamily. L-isoaspartyl/D-aspartyl protein methyltransferase family.

It localises to the cytoplasm. The enzyme catalyses [protein]-L-isoaspartate + S-adenosyl-L-methionine = [protein]-L-isoaspartate alpha-methyl ester + S-adenosyl-L-homocysteine. In terms of biological role, catalyzes the methyl esterification of L-isoaspartyl residues in peptides and proteins that result from spontaneous decomposition of normal L-aspartyl and L-asparaginyl residues. It plays a role in the repair and/or degradation of damaged proteins. In Picosynechococcus sp. (strain ATCC 27264 / PCC 7002 / PR-6) (Agmenellum quadruplicatum), this protein is Protein-L-isoaspartate O-methyltransferase.